A 171-amino-acid chain; its full sequence is uncharacterized protein (171 aa).

A PfpI endopeptidase domain is found at 3–171 (KKVAIILANE…FNREIVKQLQ (169 aa)).

This sequence belongs to the peptidase C56 family.

This is an uncharacterized protein from Staphylococcus aureus (strain MRSA252).